The following is a 295-amino-acid chain: ATP synthase gamma chain (295 aa).

The protein belongs to the ATPase gamma chain family. In terms of assembly, F-type ATPases have 2 components, CF(1) - the catalytic core - and CF(0) - the membrane proton channel. CF(1) has five subunits: alpha(3), beta(3), gamma(1), delta(1), epsilon(1). CF(0) has three main subunits: a, b and c.

The protein resides in the cell inner membrane. In terms of biological role, produces ATP from ADP in the presence of a proton gradient across the membrane. The gamma chain is believed to be important in regulating ATPase activity and the flow of protons through the CF(0) complex. This chain is ATP synthase gamma chain, found in Methylorubrum populi (strain ATCC BAA-705 / NCIMB 13946 / BJ001) (Methylobacterium populi).